Reading from the N-terminus, the 147-residue chain is Transcriptional regulator MraZ (147 aa).

SpoVT-AbrB domains are found at residues 5 to 52 and 81 to 124; these read NHPT…PMEE and GQVV…NAEH.

It belongs to the MraZ family. In terms of assembly, forms oligomers.

Its subcellular location is the cytoplasm. It localises to the nucleoid. The sequence is that of Transcriptional regulator MraZ from Koribacter versatilis (strain Ellin345).